A 397-amino-acid polypeptide reads, in one-letter code: uncharacterized protein (397 aa).

2 positions are modified to phosphoserine: S115 and S141. The segment at 135 to 156 is disordered; sequence NSLNHDSPPHTPARRSDNSTSK. K239 participates in a covalent cross-link: Glycyl lysine isopeptide (Lys-Gly) (interchain with G-Cter in SUMO2). 2 positions are modified to phosphoserine: S269 and S296. The tract at residues 289–316 is disordered; the sequence is GRGPTKASPQPALTVKAKATSSATTLAS. The span at 300–316 shows a compositional bias: low complexity; that stretch reads ALTVKAKATSSATTLAS. S342 is modified (phosphoserine). Residues 354 to 397 form a disordered region; the sequence is SEAQDSQVTSTKSPTVRCIVPDPPAPLASQRPPRRRWRRTCKDC. The span at 356 to 367 shows a compositional bias: polar residues; that stretch reads AQDSQVTSTKSP. Residues 385–397 show a composition bias toward basic residues; sequence PPRRRWRRTCKDC.

This is an uncharacterized protein from Rattus norvegicus (Rat).